A 243-amino-acid chain; its full sequence is Transmembrane protein 174 (243 aa).

2 helical membrane passes run 40–60 and 73–93; these read LLFS…MGWI and LLGP…VCKF.

In terms of assembly, interacts with SLC34A1; regulates SLC34A1 internalization by PTH and FGF23. In terms of tissue distribution, predominantly expressed in kidney. Selectively localized in the apical membrane of renal proximal tubule epithelial cells.

Its subcellular location is the endoplasmic reticulum membrane. It localises to the apical cell membrane. Its function is as follows. Regulator of plasma phosphate homeostasis. Decreases serum inorganic phosphate (Pi) uptake by regulating the sodium-phosphate cotransporter SLC34A1 trafficking by PTH and FGF23 in the kidney. This Homo sapiens (Human) protein is Transmembrane protein 174 (TMEM174).